Reading from the N-terminus, the 129-residue chain is MARVKRALNAQKKRRTVLKASKGYRGQRSRLYRKAKEQQLHSLTYAYRDRKARKGDFRKLWITRINAAARLNGITYNRLIQGLKAAGVEVDRKNLAEIAVSDAAAFAALAEVAKAALPADVNAPSGEAA.

This sequence belongs to the bacterial ribosomal protein bL20 family.

In terms of biological role, binds directly to 23S ribosomal RNA and is necessary for the in vitro assembly process of the 50S ribosomal subunit. It is not involved in the protein synthesizing functions of that subunit. The polypeptide is Large ribosomal subunit protein bL20 (Mycolicibacterium gilvum (strain PYR-GCK) (Mycobacterium gilvum (strain PYR-GCK))).